The following is a 204-amino-acid chain: Carbon disulfide hydrolase (204 aa).

3 residues coordinate Zn(2+): cysteine 35, histidine 88, and cysteine 91.

It belongs to the beta-class carbonic anhydrase family. Forms a hexadecameric catenane homooligomer, through interactions of two interlocked octameric rings. Zn(2+) is required as a cofactor.

It carries out the reaction carbon disulfide + 2 H2O = 2 hydrogen sulfide + CO2 + 2 H(+). The protein operates within sulfur metabolism; hydrogen sulfide biosynthesis. In terms of biological role, catalyzes the conversion of carbon disulfide into hydrogen sulfide and carbon dioxide, with carbonyl sulfide as an intermediate. Likely plays a key role in sulfur metabolism in S.solfataricus. Does not show carbonic anhydrase activity (hydration of CO(2) to carbonate). This chain is Carbon disulfide hydrolase, found in Saccharolobus solfataricus (strain ATCC 35092 / DSM 1617 / JCM 11322 / P2) (Sulfolobus solfataricus).